Here is a 206-residue protein sequence, read N- to C-terminus: uncharacterized protein (206 aa).

Residues 29-169 (YWHSTFHCWV…DGVFAEGFIV (141 aa)) form the Nudix hydrolase domain. A Nudix box motif is present at residues 69 to 90 (AGHIKSGESIEDGVRELKEELG). Glu-84 and Glu-88 together coordinate Mg(2+).

The protein belongs to the Nudix hydrolase family. Mg(2+) is required as a cofactor.

This is an uncharacterized protein from Clostridium acetobutylicum (strain ATCC 824 / DSM 792 / JCM 1419 / IAM 19013 / LMG 5710 / NBRC 13948 / NRRL B-527 / VKM B-1787 / 2291 / W).